Consider the following 250-residue polypeptide: Bacteriorhodopsin-II (250 aa).

Transmembrane regions (helical) follow at residues 14-34 (EGIW…YFMA), 49-69 (VITI…FFGF), 89-109 (YADW…LAGA), 114-134 (MASL…ATLM), 142-162 (AFWT…VVVV), 183-203 (IILV…EGLG), and 210-230 (ETLL…FILL). Lysine 222 is modified (N6-(retinylidene)lysine).

It belongs to the archaeal/bacterial/fungal opsin family. The covalent binding of retinal to the apoprotein, bacterioopsin, generates bacteriorhodopsin.

It localises to the membrane. Light-driven proton pump. This chain is Bacteriorhodopsin-II (xop1), found in Haloarcula marismortui (strain ATCC 43049 / DSM 3752 / JCM 8966 / VKM B-1809) (Halobacterium marismortui).